The chain runs to 1278 residues: Mediator of RNA polymerase II transcription subunit 16 (1278 aa).

Residues 1-10 (MNQQNPEEEV) show a composition bias toward acidic residues. 3 disordered regions span residues 1–21 (MNQQ…GGGI), 530–557 (TKDF…GDEK), and 839–861 (SAGT…SPAT). Positions 547–557 (APKEPDSGDEK) are enriched in basic and acidic residues. Residues 841-861 (GTGSNRNNVTSPTQNASSPAT) show a composition bias toward polar residues.

This sequence belongs to the plant Mediator complex subunit 16 family. Component of the Mediator complex.

The protein resides in the nucleus. Its function is as follows. Component of the Mediator complex, a coactivator involved in the regulated transcription of nearly all RNA polymerase II-dependent genes. Mediator functions as a bridge to convey information from gene-specific regulatory proteins to the basal RNA polymerase II transcription machinery. The Mediator complex, having a compact conformation in its free form, is recruited to promoters by direct interactions with regulatory proteins and serves for the assembly of a functional preinitiation complex with RNA polymerase II and the general transcription factors. Involved in the regulation of the circadian clock, in the control of flowering time, in freezing- and osmotic-stress tolerance and in both salicylic acid- and jasmonate-mediated defense gene expression. In Arabidopsis thaliana (Mouse-ear cress), this protein is Mediator of RNA polymerase II transcription subunit 16 (MED16).